A 298-amino-acid polypeptide reads, in one-letter code: uncharacterized protein (298 aa).

The HTH lysR-type domain maps to 1 to 61; that stretch reads MDIFISKKMR…TRKDNNISLN (61 aa). The H-T-H motif DNA-binding region spans 21–40; that stretch reads IARAAEKIHMTASPFGKSIA.

It belongs to the LysR transcriptional regulatory family.

This is an uncharacterized protein from Escherichia coli (strain K12).